The sequence spans 45 residues: uncharacterized protein (45 aa).

The segment covering 1–26 (MIMGKDRQEKKLKASGRVESDRDQSI) has biased composition (basic and acidic residues). Positions 1–45 (MIMGKDRQEKKLKASGRVESDRDQSIHYDGATSLEQNGRFKKRKS) are disordered.

This is an uncharacterized protein from Bacillus subtilis (strain 168).